The following is a 423-amino-acid chain: COUP transcription factor 1 (423 aa).

Positions 1–81 are disordered; the sequence is MAMVVSSWRD…QGPPGSGQSQ (81 aa). A compositionally biased stretch (low complexity) spans 39–67; sequence EQQQQAGSGAPHTPQTPGQPGAPATPGTA. The nuclear receptor DNA-binding region spans 83-158; that stretch reads HIECVVCGDK…VGMRREAVQR (76 aa). NR C4-type zinc fingers lie at residues 86-106 and 122-146; these read CVVCGDKSSGKHYGQFTCEGC and CRANRNCPIDQHHRNQCQYCRLKKC. One can recognise an NR LBD domain in the interval 184–410; it reads YLSGYISLLL…TLIRDMLLSG (227 aa).

This sequence belongs to the nuclear hormone receptor family. NR2 subfamily. As to quaternary structure, binds DNA as dimer; homodimer and probable heterodimer with NR2F6. Interacts with GTF2B; this interaction is direct. Interacts with COPS2.

Its subcellular location is the nucleus. Functionally, coup (chicken ovalbumin upstream promoter) transcription factor binds to the ovalbumin promoter and, in conjunction with another protein (S300-II) stimulates initiation of transcription. Binds to both direct repeats and palindromes of the 5'-AGGTCA-3' motif. Represses transcriptional activity of LHCG. This Homo sapiens (Human) protein is COUP transcription factor 1 (NR2F1).